Here is a 623-residue protein sequence, read N- to C-terminus: Chaperone protein HtpG (623 aa).

Residues 1–336 (MVSKQQTMGF…ASDLPLNISR (336 aa)) are a; substrate-binding. Residues 337-550 (EILQDNKQVE…EQDMGLEMQR (214 aa)) form a b region. The segment at 551–623 (ILQAAGQQVP…NRVNRLLVSS (73 aa)) is c.

Belongs to the heat shock protein 90 family. Homodimer.

The protein localises to the cytoplasm. In terms of biological role, molecular chaperone. Has ATPase activity. The protein is Chaperone protein HtpG of Legionella pneumophila (strain Paris).